The chain runs to 400 residues: NADH-ubiquinone oxidoreductase 49 kDa subunit (400 aa).

Belongs to the complex I 49 kDa subunit family.

The protein resides in the mitochondrion. The enzyme catalyses a ubiquinone + NADH + 5 H(+)(in) = a ubiquinol + NAD(+) + 4 H(+)(out). Its function is as follows. Core subunit of the mitochondrial membrane respiratory chain NADH dehydrogenase (Complex I) that is believed to belong to the minimal assembly required for catalysis. Complex I functions in the transfer of electrons from NADH to the respiratory chain. The immediate electron acceptor for the enzyme is believed to be ubiquinone. Component of the iron-sulfur (IP) fragment of the enzyme. Component of the iron-sulfur (IP) fragment of the enzyme. The sequence is that of NADH-ubiquinone oxidoreductase 49 kDa subunit (NAD7) from Paramecium tetraurelia.